Here is a 350-residue protein sequence, read N- to C-terminus: Holliday junction branch migration complex subunit RuvB (350 aa).

The large ATPase domain (RuvB-L) stretch occupies residues 1 to 184; that stretch reads MSKTPERLVT…FGIPIRLEFY (184 aa). Residues Leu-23, Arg-24, Gly-65, Lys-68, Thr-69, Thr-70, 131 to 133, Arg-174, Tyr-184, and Arg-221 each bind ATP; that span reads EDF. Thr-69 contributes to the Mg(2+) binding site. The segment at 185-255 is small ATPAse domain (RuvB-S); sequence TIEELERIVL…LADKALSLLD (71 aa). Residues 258 to 350 form a head domain (RuvB-H) region; the sequence is PIGLDQMDRR…GLFPDQSEED (93 aa). Positions 294, 313, and 318 each coordinate DNA.

Belongs to the RuvB family. As to quaternary structure, homohexamer. Forms an RuvA(8)-RuvB(12)-Holliday junction (HJ) complex. HJ DNA is sandwiched between 2 RuvA tetramers; dsDNA enters through RuvA and exits via RuvB. An RuvB hexamer assembles on each DNA strand where it exits the tetramer. Each RuvB hexamer is contacted by two RuvA subunits (via domain III) on 2 adjacent RuvB subunits; this complex drives branch migration. In the full resolvosome a probable DNA-RuvA(4)-RuvB(12)-RuvC(2) complex forms which resolves the HJ.

It is found in the cytoplasm. It catalyses the reaction ATP + H2O = ADP + phosphate + H(+). Its function is as follows. The RuvA-RuvB-RuvC complex processes Holliday junction (HJ) DNA during genetic recombination and DNA repair, while the RuvA-RuvB complex plays an important role in the rescue of blocked DNA replication forks via replication fork reversal (RFR). RuvA specifically binds to HJ cruciform DNA, conferring on it an open structure. The RuvB hexamer acts as an ATP-dependent pump, pulling dsDNA into and through the RuvAB complex. RuvB forms 2 homohexamers on either side of HJ DNA bound by 1 or 2 RuvA tetramers; 4 subunits per hexamer contact DNA at a time. Coordinated motions by a converter formed by DNA-disengaged RuvB subunits stimulates ATP hydrolysis and nucleotide exchange. Immobilization of the converter enables RuvB to convert the ATP-contained energy into a lever motion, pulling 2 nucleotides of DNA out of the RuvA tetramer per ATP hydrolyzed, thus driving DNA branch migration. The RuvB motors rotate together with the DNA substrate, which together with the progressing nucleotide cycle form the mechanistic basis for DNA recombination by continuous HJ branch migration. Branch migration allows RuvC to scan DNA until it finds its consensus sequence, where it cleaves and resolves cruciform DNA. The protein is Holliday junction branch migration complex subunit RuvB of Beijerinckia indica subsp. indica (strain ATCC 9039 / DSM 1715 / NCIMB 8712).